The sequence spans 364 residues: Aromatic prenyltransferase (364 aa).

The first 22 residues, 1-22 (MDRNQWTLALMALMRFAHRAFI), serve as a signal peptide directing secretion. N-linked (GlcNAc...) asparagine glycosylation is found at Asn-142 and Asn-337.

The protein belongs to the aromatic prenyltransferase family.

Functionally, prenyltransferase that attaches isoprenoid moieties to carbon atoms of aromatic substrates in an enzyme-catalyzed Friedel-Crafts reaction. In Talaromyces marneffei (strain ATCC 18224 / CBS 334.59 / QM 7333) (Penicillium marneffei), this protein is Aromatic prenyltransferase.